A 503-amino-acid polypeptide reads, in one-letter code: Endoglycoceramidase (503 aa).

Residues 1–21 form the signal peptide; that stretch reads MAETQPLVFVLMSISAILTAG. N-linked (GlcNAc...) asparagine glycosylation is found at Asn72, Asn108, and Asn205. Glu239 (proton donor) is an active-site residue. N-linked (GlcNAc...) asparagine glycans are attached at residues Asn307, Asn409, and Asn485.

The protein belongs to the glycosyl hydrolase 5 (cellulase A) family.

It localises to the secreted. The protein resides in the nematocyst. The enzyme catalyses an oligoglycosyl-(1-&gt;4)-beta-D-glucosyl-(1&lt;-&gt;1)-ceramide + H2O = an oligoglycosyl-(1-&gt;4)-D-glucose + an N-acyl-sphingoid base. Its activity is regulated as follows. Completely inhibited by Hg(2+). Cu(2+) and zinc have no effect on enzyme activity. Lithium, potassium, manganese, Ni(2+), calcium, magnesium and EDTA have no significant effect on enzyme activity. Enzyme requires presence of detergents such as Triton X-100 and Lubrol PX for the hydrolysis of glycosphingolipids. Taurodeoxycholate strongly inhibits the enzyme activity and SDS completely inhibits the enzyme activity. Functionally, hydrolysis of the glycosidic linkage between oligosaccharides and ceramides of glycosphingolipids, especially b-series polysialogangliosides. The polypeptide is Endoglycoceramidase (Cyanea nozakii (Jellyfish)).